The chain runs to 173 residues: MTIILGIDPGSRITGYGVIRQVGRNLEYLGSGCIRTSAEDIPGRLKQIYAGVSEVITQFQPDTFAIEEVFMGKNASSALKLGQARGSAIVAAVNADLPVSEYAARLIKQAVVGTGAADKAQVQHMVCSVLKLPGKPQADAADALAVAICHAHTHKTLIAMSGKASSARRGRYR.

Residues Asp8, Glu67, and Asp139 contribute to the active site. Mg(2+) contacts are provided by Asp8, Glu67, and Asp139.

The protein belongs to the RuvC family. As to quaternary structure, homodimer which binds Holliday junction (HJ) DNA. The HJ becomes 2-fold symmetrical on binding to RuvC with unstacked arms; it has a different conformation from HJ DNA in complex with RuvA. In the full resolvosome a probable DNA-RuvA(4)-RuvB(12)-RuvC(2) complex forms which resolves the HJ. The cofactor is Mg(2+).

It localises to the cytoplasm. It carries out the reaction Endonucleolytic cleavage at a junction such as a reciprocal single-stranded crossover between two homologous DNA duplexes (Holliday junction).. Its function is as follows. The RuvA-RuvB-RuvC complex processes Holliday junction (HJ) DNA during genetic recombination and DNA repair. Endonuclease that resolves HJ intermediates. Cleaves cruciform DNA by making single-stranded nicks across the HJ at symmetrical positions within the homologous arms, yielding a 5'-phosphate and a 3'-hydroxyl group; requires a central core of homology in the junction. The consensus cleavage sequence is 5'-(A/T)TT(C/G)-3'. Cleavage occurs on the 3'-side of the TT dinucleotide at the point of strand exchange. HJ branch migration catalyzed by RuvA-RuvB allows RuvC to scan DNA until it finds its consensus sequence, where it cleaves and resolves the cruciform DNA. This chain is Crossover junction endodeoxyribonuclease RuvC, found in Photobacterium profundum (strain SS9).